Reading from the N-terminus, the 766-residue chain is Slit homolog 2 protein (766 aa).

Positions 1–30 (MSGIGWQTLSLSLALVLSILNKVAPHACPA) are cleaved as a signal peptide. Residues 31–55 (QCSCSGSTVDCHGLALRIVPRNIPR) enclose the LRRNT domain. 6 LRR repeats span residues 56-77 (NTERLDLNGNNITRITKTDFAG), 80-101 (HLRILQLMENKISTIERGAFHD), 104-125 (ELERLRLNRNNLQLFPELLFLG), 128-149 (KLYRLDLSENQIQAIPRKAFRG), 152-173 (DIKNLQLDYNQISCIEDGAFRA), and 176-197 (DLEVLTLNNNNITRLSVASFNH). N-linked (GlcNAc...) asparagine glycosylation is present at asparagine 66. N-linked (GlcNAc...) asparagine glycosylation is present at asparagine 186. Residues 209-259 (NNLYCDCHLAWLSDWLRQRPRVGLYTQCMGPSHLRGHNVAEVQKREFVCSD) form the LRRCT 1 domain. Residues 268-304 (MAPSCSVLHCPIACTCSNNIVDCRGKGLTEIPTNLPE) form the LRRNT 2 domain. A disulfide bridge connects residues cysteine 281 and cysteine 290. 5 LRR repeats span residues 305 to 326 (TITEIRLEQNSIRVIPPGAFSP), 329 to 350 (KLRRLDLSNNQISELAPDAFQG), 353 to 374 (SLNSLVLYGNKITELPKSLFEG), 377 to 398 (SLQLLLLNANKINCLRVDAFQD), and 401 to 422 (NLNLLSLYDNKLQTVAKGTFSA). The LRRCT 2 domain maps to 434–484 (NPFICDCHLKWLADYLHTNPIETSGARCTSPRRLANKRIGQIKSKKFRCSG). Intrachain disulfides connect cysteine 438/cysteine 461, cysteine 440/cysteine 482, cysteine 502/cysteine 508, and cysteine 506/cysteine 515. The 37-residue stretch at 493-529 (SGDCFADLACPEKCRCEGTTVDCSNQKLNKIPDHIPQ) folds into the LRRNT 3 domain. LRR repeat units follow at residues 530–551 (YTAELRLNNNEFTVLEATGIFK), 555–576 (QLRKINLSNNKITDIEEGAFEG), 579–600 (GVNEILLTSNRLENVQHKMFKG), 603–624 (SLKTLMLRSNRISCVGNDSFTG), and 627–648 (SVRLLSLYDNQITTVAPGAFGT). Residue asparagine 560 is glycosylated (N-linked (GlcNAc...) asparagine). An N-linked (GlcNAc...) asparagine glycan is attached at asparagine 619. Positions 660-710 (NPFNCNCHLAWLGEWLRRKRIVTGNPRCQKPYFLKEIPIQDVAIQDFTCDD) constitute an LRRCT 3 domain. Disulfide bonds link cysteine 664-cysteine 687, cysteine 666-cysteine 708, cysteine 723-cysteine 729, and cysteine 727-cysteine 736. The 37-residue stretch at 714–750 (DNSCSPLSRCPSECTCLDTVVRCSNKGLKVLPKGIPR) folds into the LRRNT 4 domain.

As to quaternary structure, homodimer. Binds ROBO1 and ROBO2 with high affinity. Interacts with GREM1.

It localises to the secreted. Thought to act as molecular guidance cue in cellular migration, and function appears to be mediated by interaction with roundabout homolog receptors. During neural development involved in axonal navigation at the ventral midline of the neural tube and projection of axons to different regions. SLIT1 and SLIT2 seem to be essential for midline guidance in the forebrain by acting as repulsive signal preventing inappropriate midline crossing by axons projecting from the olfactory bulb. In spinal cord development may play a role in guiding commissural axons once they reached the floor plate by modulating the response to netrin. In vitro, silences the attractive effect of NTN1 but not its growth-stimulatory effect and silencing requires the formation of a ROBO1-DCC complex. May be implicated in spinal cord midline post-crossing axon repulsion. In vitro, only commissural axons that crossed the midline responded to SLIT2. In the developing visual system appears to function as repellent for retinal ganglion axons by providing a repulsion that directs these axons along their appropriate paths prior to, and after passage through, the optic chiasm. In vitro, collapses and repels retinal ganglion cell growth cones. Seems to play a role in branching and arborization of CNS sensory axons, and in neuronal cell migration. Seems to be involved in regulating leukocyte migration. In Rattus norvegicus (Rat), this protein is Slit homolog 2 protein (Slit2).